Reading from the N-terminus, the 89-residue chain is Elongation factor 1-beta (89 aa).

This sequence belongs to the EF-1-beta/EF-1-delta family.

Promotes the exchange of GDP for GTP in EF-1-alpha/GDP, thus allowing the regeneration of EF-1-alpha/GTP that could then be used to form the ternary complex EF-1-alpha/GTP/AAtRNA. In Methanothermobacter thermautotrophicus (strain ATCC 29096 / DSM 1053 / JCM 10044 / NBRC 100330 / Delta H) (Methanobacterium thermoautotrophicum), this protein is Elongation factor 1-beta (ef1b).